The chain runs to 1040 residues: Contactin-2 (1040 aa).

The signal sequence occupies residues 1–30; sequence MGAPARKRASLLLLLLATMALVSSPGWSFS. 6 consecutive Ig-like C2-type domains span residues 39 to 130, 135 to 224, 241 to 324, 329 to 413, 419 to 506, and 511 to 605; these read PVFE…AVLR, QEFS…SVFS, PSIK…GRII, PEWL…AELA, PDFR…GILS, and TKIT…ATVL. 4 disulfide bridges follow: Cys63–Cys113, Cys157–Cys209, Cys263–Cys308, and Cys350–Cys397. 3 N-linked (GlcNAc...) asparagine glycosylation sites follow: Asn78, Asn200, and Asn206. 4 N-linked (GlcNAc...) asparagine glycosylation sites follow: Asn463, Asn479, Asn500, and Asn527. 4 consecutive Fibronectin type-III domains span residues 612–710, 715–812, 817–913, and 917–1008; these read PPGG…TKEA, APSG…SAEE, APAK…MKPP, and PPGN…NGGT. Asn777 carries an N-linked (GlcNAc...) asparagine glycan. The short motif at 796–798 is the Cell attachment site element; that stretch reads RGD. Asn832, Asn920, and Asn942 each carry an N-linked (GlcNAc...) asparagine glycan. The segment at 897 to 922 is disordered; that stretch reads GTGPASPSADAMTMKPPPRRPPGNIS. The GPI-anchor amidated serine moiety is linked to residue Ser1014. A propeptide spans 1015–1040 (removed in mature form); that stretch reads SAVRPAHPGPVFSCMVILMLAGCQRL.

The protein belongs to the immunoglobulin superfamily. Contactin family.

The protein resides in the cell membrane. Its function is as follows. In conjunction with another transmembrane protein, CNTNAP2, contributes to the organization of axonal domains at nodes of Ranvier by maintaining voltage-gated potassium channels at the juxtaparanodal region. This chain is Contactin-2 (Cntn2), found in Mus musculus (Mouse).